Consider the following 419-residue polypeptide: D-amino acid dehydrogenase (419 aa).

Residue 3 to 17 (VIVLGSGVIGVASAY) participates in FAD binding.

The protein belongs to the DadA oxidoreductase family. FAD serves as cofactor.

It catalyses the reaction a D-alpha-amino acid + A + H2O = a 2-oxocarboxylate + AH2 + NH4(+). It participates in amino-acid degradation; D-alanine degradation; NH(3) and pyruvate from D-alanine: step 1/1. Its function is as follows. Oxidative deamination of D-amino acids. The chain is D-amino acid dehydrogenase from Acinetobacter baylyi (strain ATCC 33305 / BD413 / ADP1).